Consider the following 417-residue polypeptide: 4-hydroxy-3-methylbut-2-en-1-yl diphosphate synthase (flavodoxin) (417 aa).

Positions 304, 307, 350, and 357 each coordinate [4Fe-4S] cluster.

This sequence belongs to the IspG family. Requires [4Fe-4S] cluster as cofactor.

It carries out the reaction (2E)-4-hydroxy-3-methylbut-2-enyl diphosphate + oxidized [flavodoxin] + H2O + 2 H(+) = 2-C-methyl-D-erythritol 2,4-cyclic diphosphate + reduced [flavodoxin]. The protein operates within isoprenoid biosynthesis; isopentenyl diphosphate biosynthesis via DXP pathway; isopentenyl diphosphate from 1-deoxy-D-xylulose 5-phosphate: step 5/6. Its function is as follows. Converts 2C-methyl-D-erythritol 2,4-cyclodiphosphate (ME-2,4cPP) into 1-hydroxy-2-methyl-2-(E)-butenyl 4-diphosphate. The sequence is that of 4-hydroxy-3-methylbut-2-en-1-yl diphosphate synthase (flavodoxin) from Rhizobium meliloti (strain 1021) (Ensifer meliloti).